The following is a 299-amino-acid chain: 4-diphosphocytidyl-2-C-methyl-D-erythritol kinase (299 aa).

Lysine 18 is a catalytic residue. 104-114 (PIASGIGGGSS) serves as a coordination point for ATP. Residue aspartate 146 is part of the active site.

Belongs to the GHMP kinase family. IspE subfamily.

The catalysed reaction is 4-CDP-2-C-methyl-D-erythritol + ATP = 4-CDP-2-C-methyl-D-erythritol 2-phosphate + ADP + H(+). It functions in the pathway isoprenoid biosynthesis; isopentenyl diphosphate biosynthesis via DXP pathway; isopentenyl diphosphate from 1-deoxy-D-xylulose 5-phosphate: step 3/6. Catalyzes the phosphorylation of the position 2 hydroxy group of 4-diphosphocytidyl-2C-methyl-D-erythritol. This is 4-diphosphocytidyl-2-C-methyl-D-erythritol kinase from Brucella melitensis biotype 1 (strain ATCC 23456 / CCUG 17765 / NCTC 10094 / 16M).